Reading from the N-terminus, the 148-residue chain is Large ribosomal subunit protein uL13 (148 aa).

This sequence belongs to the universal ribosomal protein uL13 family. As to quaternary structure, part of the 50S ribosomal subunit.

Functionally, this protein is one of the early assembly proteins of the 50S ribosomal subunit, although it is not seen to bind rRNA by itself. It is important during the early stages of 50S assembly. The polypeptide is Large ribosomal subunit protein uL13 (Ureaplasma urealyticum serovar 10 (strain ATCC 33699 / Western)).